Here is a 60-residue protein sequence, read N- to C-terminus: Large ribosomal subunit protein bL32 (60 aa).

It belongs to the bacterial ribosomal protein bL32 family.

The chain is Large ribosomal subunit protein bL32 from Streptococcus pneumoniae serotype 19F (strain G54).